The sequence spans 342 residues: Flagellar P-ring protein (342 aa).

The signal sequence occupies residues 1–19; that stretch reads MKRVFLWLIFVLAFHKLLA.

The protein belongs to the FlgI family. In terms of assembly, the basal body constitutes a major portion of the flagellar organelle and consists of four rings (L,P,S, and M) mounted on a central rod.

It is found in the periplasm. The protein localises to the bacterial flagellum basal body. Its function is as follows. Assembles around the rod to form the L-ring and probably protects the motor/basal body from shearing forces during rotation. The sequence is that of Flagellar P-ring protein from Helicobacter pylori (strain G27).